Consider the following 445-residue polypeptide: Phosphoglucosamine mutase (445 aa).

S102 serves as the catalytic Phosphoserine intermediate. Residues S102, D241, D243, and D245 each contribute to the Mg(2+) site. Position 102 is a phosphoserine (S102).

The protein belongs to the phosphohexose mutase family. It depends on Mg(2+) as a cofactor. Post-translationally, activated by phosphorylation.

The catalysed reaction is alpha-D-glucosamine 1-phosphate = D-glucosamine 6-phosphate. Functionally, catalyzes the conversion of glucosamine-6-phosphate to glucosamine-1-phosphate. The protein is Phosphoglucosamine mutase of Shigella dysenteriae serotype 1 (strain Sd197).